A 664-amino-acid chain; its full sequence is Macoilin (664 aa).

4 consecutive transmembrane segments (helical) span residues Thr-28–Leu-48, Ala-75–Ile-95, Val-120–Phe-140, and Phe-154–Val-174. A compositionally biased stretch (basic and acidic residues) spans Tyr-252–Lys-265. Residues Tyr-252 to Asn-274 form a disordered region. A Phosphoserine modification is found at Ser-305. Positions Lys-320–Ser-348 are enriched in polar residues. The interval Lys-320–Asn-375 is disordered. N-linked (GlcNAc...) asparagine glycosylation is present at Asn-324. Position 332 is a phosphoserine (Ser-332). Asn-340 and Asn-452 each carry an N-linked (GlcNAc...) asparagine glycan. A disordered region spans residues Thr-630–Lys-664. Residues Ser-631 and Ser-634 each carry the phosphoserine modification. Residue Asn-655 is glycosylated (N-linked (GlcNAc...) asparagine).

The protein belongs to the macoilin family.

It localises to the rough endoplasmic reticulum membrane. The protein localises to the nucleus membrane. Functionally, plays a role in the regulation of neuronal activity. In Rattus norvegicus (Rat), this protein is Macoilin.